The following is a 50-amino-acid chain: Thrombin-like enzyme BpirSP27 (50 aa).

A Peptidase S1 domain is found at 1–50 (VVGGDECNINEHRSLVAIFNSTGFFCSGILLNQEWVLTASHCDSTNFQMK). Residue asparagine 20 is glycosylated (N-linked (GlcNAc...) asparagine). Residues cysteine 26 and cysteine 42 are joined by a disulfide bond. Histidine 41 acts as the Charge relay system in catalysis.

This sequence belongs to the peptidase S1 family. Snake venom subfamily. As to quaternary structure, monomer. Post-translationally, N-glycosylated. In terms of tissue distribution, expressed by the venom gland.

The protein resides in the secreted. Its activity is regulated as follows. Inhibited by serine protease inhibitors PMSF, benzamidine, leupeptin and aprotinin, as well as by copper (Cu2+) and manganese (Mn2+) ions. Not inhibited by metalloprotease inhibitors EDTA, EGTA and 1,10-phenanthroline, as well as by barium (Ba2+) and calcium ion (Ca2+). In terms of biological role, snake venom serine protease that interferes with the hemostatic system of the prey. It preferentially degrades the Bbeta chain (FGB) of fibrinogen, with minor effects on the Aalpha chain (FGA). It presents a lower ability to degrade fibrin clots than BpirSP41. It hydrolyzes chromogenic substrates S-2238 (used for testing thrombin activity), S-2222 (factor Xa), S-2266 (glandular kallikrein and factor XIa), S-2302 (plasma kallikrein, factor XIa and XIIa), and S-2251 (plasmin). It shows a decrease in the clotting time of human plasma in the presence of increasing doses of the enzyme. Its minimum coagulant dose (MCD) is 3.5 ug. It also promotes platelet aggregation in a concentration-dependent manner in the presence or absence of calcium. It also shows 20% inhibition of the hemolytic activity promoted by the complement pathways and possess only a minor role in the induction of edema and pain in rat. This is Thrombin-like enzyme BpirSP27 from Bothrops pirajai (Piraja's lancehead).